We begin with the raw amino-acid sequence, 347 residues long: Epimerase family protein SDR39U1 homolog, chloroplastic (347 aa).

Residues 1-37 (MELLCSPTSLSSSFALSSALLVPRSFSMPGTRRFMVL) constitute a chloroplast transit peptide. Residues 54–57 (TGFI), 76–77 (TR), 115–119 (LAGLP), and arginine 136 each bind NADP(+).

As to quaternary structure, can form homodimers. In terms of tissue distribution, expressed in leaves, stems and flower buds.

The protein localises to the plastid. The protein resides in the chloroplast inner membrane. It is found in the chloroplast. In terms of biological role, putative NADP-dependent oxidoreductase that acts as a positive regulator of chloroplast division. May play a role at an early stage of the division process. This chain is Epimerase family protein SDR39U1 homolog, chloroplastic, found in Arabidopsis thaliana (Mouse-ear cress).